The following is a 111-amino-acid chain: Cyanovirin-N homolog (111 aa).

Belongs to the cyanovirin-N family.

In terms of biological role, mannose-binding lectin. This Neurospora crassa (strain ATCC 24698 / 74-OR23-1A / CBS 708.71 / DSM 1257 / FGSC 987) protein is Cyanovirin-N homolog.